Reading from the N-terminus, the 95-residue chain is ESAT-6-like protein EsxC (95 aa).

The protein belongs to the WXG100 family. ESAT-6 subfamily.

Its subcellular location is the secreted. This Mycobacterium tuberculosis (strain CDC 1551 / Oshkosh) protein is ESAT-6-like protein EsxC.